Reading from the N-terminus, the 456-residue chain is Asparagine--tRNA ligase (456 aa).

Belongs to the class-II aminoacyl-tRNA synthetase family. Homodimer.

Its subcellular location is the cytoplasm. The catalysed reaction is tRNA(Asn) + L-asparagine + ATP = L-asparaginyl-tRNA(Asn) + AMP + diphosphate + H(+). The sequence is that of Asparagine--tRNA ligase from Mycoplasma genitalium (strain ATCC 33530 / DSM 19775 / NCTC 10195 / G37) (Mycoplasmoides genitalium).